A 513-amino-acid polypeptide reads, in one-letter code: Meiotic sister chromatid recombination protein 1 (513 aa).

Residue Thr-237 is modified to Phosphothreonine. Ser-243 carries the phosphoserine modification.

The chain is Meiotic sister chromatid recombination protein 1 (MSC1) from Saccharomyces cerevisiae (strain ATCC 204508 / S288c) (Baker's yeast).